Here is a 25-residue protein sequence, read N- to C-terminus: Small ribosomal subunit protein eS32 (25 aa).

The disordered stretch occupies residues 1–25; it reads MRDKWRKKRVRRLKRKRRKVRARSK.

The protein belongs to the eukaryotic ribosomal protein eS32 family. In terms of assembly, component of the small ribosomal subunit. Mature ribosomes consist of a small (40S) and a large (60S) subunit. The 40S subunit contains about 32 different proteins and 1 molecule of RNA (18S). The 60S subunit contains 45 different proteins and 3 molecules of RNA (25S, 5.8S and 5S).

It is found in the cytoplasm. Component of the ribosome, a large ribonucleoprotein complex responsible for the synthesis of proteins in the cell. The small ribosomal subunit (SSU) binds messenger RNAs (mRNAs) and translates the encoded message by selecting cognate aminoacyl-transfer RNA (tRNA) molecules. The large subunit (LSU) contains the ribosomal catalytic site termed the peptidyl transferase center (PTC), which catalyzes the formation of peptide bonds, thereby polymerizing the amino acids delivered by tRNAs into a polypeptide chain. The nascent polypeptides leave the ribosome through a tunnel in the LSU and interact with protein factors that function in enzymatic processing, targeting, and the membrane insertion of nascent chains at the exit of the ribosomal tunnel. In Candida albicans (strain SC5314 / ATCC MYA-2876) (Yeast), this protein is Small ribosomal subunit protein eS32.